Here is an 88-residue protein sequence, read N- to C-terminus: Molybdopterin synthase sulfur carrier subunit (88 aa).

At Gly-88 the chain carries 1-thioglycine; alternate. The residue at position 88 (Gly-88) is a Glycyl adenylate; alternate.

The protein belongs to the MoaD family. MOCS2A subfamily. In terms of assembly, heterotetramer; composed of 2 small (MOCS2A) and 2 large (MOCS2B) subunits. In terms of processing, C-terminal thiocarboxylation occurs in 2 steps, it is first acyl-adenylated (-COAMP) via the hesA/moeB/thiF part of MOCS3, then thiocarboxylated (-COSH) via the rhodanese domain of MOCS3.

It localises to the cytoplasm. The protein resides in the cytosol. It participates in cofactor biosynthesis; molybdopterin biosynthesis. Acts as a sulfur carrier required for molybdopterin biosynthesis. Component of the molybdopterin synthase complex that catalyzes the conversion of precursor Z into molybdopterin by mediating the incorporation of 2 sulfur atoms into precursor Z to generate a dithiolene group. In the complex, serves as sulfur donor by being thiocarboxylated (-COSH) at its C-terminus by MOCS3. After interaction with MOCS2B, the sulfur is then transferred to precursor Z to form molybdopterin. The chain is Molybdopterin synthase sulfur carrier subunit from Mus musculus (Mouse).